The following is a 730-amino-acid chain: Pentatricopeptide repeat-containing protein At5g64320, mitochondrial (730 aa).

A mitochondrion-targeting transit peptide spans 1-18 (MVMLARSKLALDVSRRSQ). 17 PPR repeats span residues 110–144 (SFDV…GIVF), 145–175 (KESL…MRNV), 181–215 (TFKS…KIPP), 216–250 (TLFT…GCVP), 251–285 (NSVI…GCVP), 286–320 (DAET…GFAP), 321–351 (DDIT…IPKP), 352–387 (EIVI…GIVP), 388–422 (DVCT…GCKP), 423–457 (NVYS…GLKP), 458–492 (NTVG…GCKP), 493–527 (DVYT…GVVA), 528–562 (NTVT…GSPL), 563–597 (DEIT…GHAP), 598–632 (SNIS…GSTP), 633–667 (DIVT…GIPP), and 668–702 (DTVT…GFVP).

It belongs to the PPR family. P subfamily.

The protein localises to the mitochondrion. This chain is Pentatricopeptide repeat-containing protein At5g64320, mitochondrial, found in Arabidopsis thaliana (Mouse-ear cress).